Reading from the N-terminus, the 425-residue chain is UPF0229 protein YE2273 (425 aa).

Residues 84 to 110 (TNDRIERPQGGGGGSGSGQGNAGQDGE) are disordered. The segment covering 92–108 (QGGGGGSGSGQGNAGQD) has biased composition (gly residues).

This sequence belongs to the UPF0229 family.

The polypeptide is UPF0229 protein YE2273 (Yersinia enterocolitica serotype O:8 / biotype 1B (strain NCTC 13174 / 8081)).